Consider the following 261-residue polypeptide: Carnitinyl-CoA dehydratase (261 aa).

Catalysis depends on Glu111, which acts as the Nucleophile. Glu131 acts as the Proton acceptor in catalysis.

This sequence belongs to the enoyl-CoA hydratase/isomerase family.

It carries out the reaction (R)-carnitinyl-CoA = crotonobetainyl-CoA + H2O. Its pathway is amine and polyamine metabolism; carnitine metabolism. Its function is as follows. Catalyzes the reversible dehydration of L-carnitinyl-CoA to crotonobetainyl-CoA. The polypeptide is Carnitinyl-CoA dehydratase (Proteus mirabilis (strain HI4320)).